A 777-amino-acid polypeptide reads, in one-letter code: Glucocorticoid receptor (777 aa).

A compositionally biased stretch (basic and acidic residues) spans 1–14; the sequence is MDSKESLTPGKEEN. The segment at 1–21 is disordered; it reads MDSKESLTPGKEENPSSVLTQ. Residues 1-420 are modulating; it reads MDSKESLTPG…TATTGPPPKL (420 aa). Threonine 8 carries the phosphothreonine modification. The residue at position 23 (arginine 23) is an Omega-N-methylarginine. Residues serine 45, serine 113, serine 134, and serine 141 each carry the phosphoserine modification. The segment at 130–182 is disordered; it reads NRSTSVPENPKSSASSSVSAAPKEKEFPKTHSDVSSEQQNLKGQTGTNGGNVK. The span at 134–150 shows a compositional bias: low complexity; the sequence is SVPENPKSSASSSVSAA. Basic and acidic residues predominate over residues 151 to 163; sequence PKEKEFPKTHSDV. Positions 164 to 174 are enriched in polar residues; it reads SSEQQNLKGQT. Phosphoserine occurs at positions 203, 211, and 226. Lysine 258 participates in a covalent cross-link: Glycyl lysine isopeptide (Lys-Gly) (interchain with G-Cter in SUMO2). Serine 267 bears the Phosphoserine mark. Glycyl lysine isopeptide (Lys-Gly) (interchain with G-Cter in SUMO); alternate cross-links involve residues lysine 277 and lysine 293. Residues lysine 277 and lysine 293 each participate in a glycyl lysine isopeptide (Lys-Gly) (interchain with G-Cter in SUMO2); alternate cross-link. Over residues 394-414 the composition is skewed to low complexity; the sequence is SSPSMRPDVSSPPSSSSTATT. Residues 394–415 form a disordered region; that stretch reads SSPSMRPDVSSPPSSSSTATTG. Serine 404 is subject to Phosphoserine. Lysine 419 is covalently cross-linked (Glycyl lysine isopeptide (Lys-Gly) (interchain with G-Cter in ubiquitin)). 2 NR C4-type zinc fingers span residues 421-441 and 457-481; these read CLVC…CGSC and CAGR…YRKC. Positions 421–486 form a DNA-binding region, nuclear receptor; sequence CLVCSDEASG…RYRKCLQAGM (66 aa). N6-acetyllysine is present on residues lysine 480, lysine 492, lysine 494, and lysine 495. Residues 485-777 are interaction with CLOCK; the sequence is GMNLEARKTK…NIKKLLFHQK (293 aa). Residues 487–523 are hinge; the sequence is NLEARKTKKKIKGIQQATTGVSQETSENPANKTIVPA. The region spanning 524 to 758 is the NR LBD domain; sequence TLPQLTPTLV…FPEMLAEIIT (235 aa). Positions 532–697 are interaction with CRY1; sequence LVSLLEVIEP…EIRMTYIKEL (166 aa). Lysine 703 is covalently cross-linked (Glycyl lysine isopeptide (Lys-Gly) (interchain with G-Cter in SUMO)).

This sequence belongs to the nuclear hormone receptor family. NR3 subfamily. As to quaternary structure, heteromultimeric cytoplasmic complex with HSP90AA1, HSPA1A/HSPA1B, and FKBP5 or another immunophilin such as PPID, STIP1, or the immunophilin homolog PPP5C. Upon ligand binding FKBP5 dissociates from the complex and FKBP4 takes its place, thereby linking the complex to dynein and mediating transport to the nucleus, where the complex dissociates. Probably forms a complex composed of chaperones HSP90 and HSP70, co-chaperones CDC37, PPP5C, TSC1 and client protein TSC2, CDK4, AKT, RAF1 and NR3C1; this complex does not contain co-chaperones STIP1/HOP and PTGES3/p23. Directly interacts with UNC45A. Binds to DNA as a homodimer, and as heterodimer with NR3C2 or the retinoid X receptor. Binds STAT5A and STAT5B homodimers and heterodimers. Interacts with NRIP1, POU2F1, POU2F2 and TRIM28. Interacts with several coactivator complexes, including the SMARCA4 complex, CREBBP/EP300, TADA2L (Ada complex) and p160 coactivators such as NCOA2 and NCOA6. Interaction with BAG1 inhibits transactivation. Interacts with HEXIM1 and TGFB1I1. Interacts with NCOA1. Interacts with NCOA3, SMARCA4, SMARCC1, SMARCD1, and SMARCE1. Interacts with CLOCK, CRY1 and CRY2 in a ligand-dependent fashion. Interacts with CIART. Interacts with RWDD3. Interacts with UBE2I/UBC9 and this interaction is enhanced in the presence of RWDD3. Interacts with GRIP1. Interacts with NR4A3 (via nuclear receptor DNA-binding domain), represses transcription activity of NR4A3 on the POMC promoter Nur response element (NurRE). Directly interacts with PNRC2 to attract and form a complex with UPF1 and DCP1A; the interaction leads to rapid mRNA degradation. Interacts with GSK3B. Interacts with FNIP1 and FNIP2. Interacts (via C-terminus) with HNRNPU (via C-terminus). Interacts with MCM3AP. Interacts (via domain NR LBD) with HSP90AA1 and HSP90AB1. In the absence of hormonal ligand, interacts with TACC1. Interacts (via NR LBD domain) with ZNF764 (via KRAB domain); the interaction regulates transcription factor activity of NR3C1 by directing its actions toward certain biologic pathways. Post-translationally, acetylation by CLOCK reduces its binding to glucocorticoid response elements and its transcriptional activity. In terms of processing, increased proteasome-mediated degradation in response to glucocorticoids. Phosphorylated in the absence of hormone; becomes hyperphosphorylated in the presence of glucocorticoid. The Ser-203, Ser-226 and Ser-404-phosphorylated forms are mainly cytoplasmic, and the Ser-211-phosphorylated form is nuclear. Phosphorylation at Ser-211 increases transcriptional activity. Phosphorylation at Ser-203, Ser-226 and Ser-404 decreases signaling capacity. Phosphorylation at Ser-404 may protect from glucocorticoid-induced apoptosis. Phosphorylation at Ser-203 and Ser-211 is not required in regulation of chromosome segregation. May be dephosphorylated by PPP5C, attenuates NR3C1 action. Post-translationally, ubiquitinated by UBR5, leading to its degradation: UBR5 specifically recognizes and binds ligand-bound NR3C1 when it is not associated with coactivators (NCOAs). In presence of NCOAs, the UBR5-degron is not accessible, preventing its ubiquitination and degradation. In terms of processing, sumoylation at Lys-277 and Lys-293 negatively regulates its transcriptional activity. Sumoylation at Lys-703 positively regulates its transcriptional activity in the presence of RWDD3. Sumoylation at Lys-277 and Lys-293 is dispensable whereas sumoylation at Lys-703 is critical for the stimulatory effect of RWDD3 on its transcriptional activity. Heat shock increases sumoylation in a RWDD3-dependent manner. As to expression, within the infant and adult hippocampal formation, highest expression observed in the DG granule cell layer with moderate levels in the DG hilus, the CA2-CA4 pyramidal cell layer and the proximal part of the CA1 pyramidal cell layer. Moderate to high expression levels found in the presubiculum and in its' superficial layers. Weak but specific expression detected throughout the entire corticle mantle. In the amygdala, moderate levels were detected in the lateral, central and medial nuclei. Moderate expression levels were present in the PVNh alongside the third ventricle.

The protein localises to the cytoplasm. The protein resides in the nucleus. Its subcellular location is the mitochondrion. It is found in the cytoskeleton. It localises to the spindle. The protein localises to the microtubule organizing center. The protein resides in the centrosome. Its subcellular location is the chromosome. It is found in the nucleoplasm. Its function is as follows. Receptor for glucocorticoids (GC). Has a dual mode of action: as a transcription factor that binds to glucocorticoid response elements (GRE), both for nuclear and mitochondrial DNA, and as a modulator of other transcription factors. Affects inflammatory responses, cellular proliferation and differentiation in target tissues. Involved in chromatin remodeling. Plays a role in rapid mRNA degradation by binding to the 5' UTR of target mRNAs and interacting with PNRC2 in a ligand-dependent manner which recruits the RNA helicase UPF1 and the mRNA-decapping enzyme DCP1A, leading to RNA decay. Could act as a coactivator for STAT5-dependent transcription upon growth hormone (GH) stimulation and could reveal an essential role of hepatic GR in the control of body growth. Mediates glucocorticoid-induced apoptosis. Promotes accurate chromosome segregation during mitosis. May act as a tumor suppressor. May play a negative role in adipogenesis through the regulation of lipolytic and antilipogenic gene expression. The chain is Glucocorticoid receptor (NR3C1) from Callithrix jacchus (White-tufted-ear marmoset).